A 91-amino-acid chain; its full sequence is MYGLINIGFGNVISGDRVIAIVNPESAPLKRLKDEAKDEGKLIDATYGRKTRAILITDSNHIILSAIQPETIAQRFKQSMIEIEENLNKVR.

It belongs to the RemA family.

The chain is Putative regulatory protein Tlet_1629 from Pseudothermotoga lettingae (strain ATCC BAA-301 / DSM 14385 / NBRC 107922 / TMO) (Thermotoga lettingae).